The chain runs to 698 residues: Elongation factor G 1 (698 aa).

The region spanning 8-290 (ERYRNIGIVA…AVVDYLPAPI (283 aa)) is the tr-type G domain. GTP contacts are provided by residues 17 to 24 (AHVDAGKT), 88 to 92 (DTPGH), and 142 to 145 (NKMD).

The protein belongs to the TRAFAC class translation factor GTPase superfamily. Classic translation factor GTPase family. EF-G/EF-2 subfamily.

It is found in the cytoplasm. Functionally, catalyzes the GTP-dependent ribosomal translocation step during translation elongation. During this step, the ribosome changes from the pre-translocational (PRE) to the post-translocational (POST) state as the newly formed A-site-bound peptidyl-tRNA and P-site-bound deacylated tRNA move to the P and E sites, respectively. Catalyzes the coordinated movement of the two tRNA molecules, the mRNA and conformational changes in the ribosome. This Shewanella denitrificans (strain OS217 / ATCC BAA-1090 / DSM 15013) protein is Elongation factor G 1.